The following is a 134-amino-acid chain: UPF0299 membrane protein KPK_1586 (134 aa).

A run of 4 helical transmembrane segments spans residues Leu5–Gly25, Ile26–Leu46, Ile66–Trp86, and Leu93–Trp113.

It belongs to the UPF0299 family.

It localises to the cell inner membrane. The sequence is that of UPF0299 membrane protein KPK_1586 from Klebsiella pneumoniae (strain 342).